Consider the following 438-residue polypeptide: Adenosylhomocysteinase (438 aa).

3 residues coordinate substrate: Thr64, Asp139, and Glu164. 165–167 (TTT) is a binding site for NAD(+). Substrate contacts are provided by Lys194 and Asp198. NAD(+)-binding positions include Asn199, 228–233 (GYGDVG), Glu251, Asn286, 307–309 (IGH), and Asn352.

It belongs to the adenosylhomocysteinase family. It depends on NAD(+) as a cofactor.

The protein resides in the cytoplasm. It catalyses the reaction S-adenosyl-L-homocysteine + H2O = L-homocysteine + adenosine. Its pathway is amino-acid biosynthesis; L-homocysteine biosynthesis; L-homocysteine from S-adenosyl-L-homocysteine: step 1/1. May play a key role in the regulation of the intracellular concentration of adenosylhomocysteine. The protein is Adenosylhomocysteinase of Coxiella burnetii (strain Dugway 5J108-111).